Consider the following 419-residue polypeptide: Tyrosine--tRNA ligase (419 aa).

L-tyrosine is bound at residue tyrosine 42. The 'HIGH' region motif lies at 47–56 (ATAPSLHVGS). Residues tyrosine 179 and glutamine 183 each contribute to the L-tyrosine site. Positions 239–243 (KMGKT) match the 'KMSKS' region motif. Lysine 242 provides a ligand contact to ATP. One can recognise an S4 RNA-binding domain in the interval 353 to 418 (IVLANLFADA…GKKKIVLVKP (66 aa)).

Belongs to the class-I aminoacyl-tRNA synthetase family. TyrS type 1 subfamily. Homodimer.

It localises to the cytoplasm. The catalysed reaction is tRNA(Tyr) + L-tyrosine + ATP = L-tyrosyl-tRNA(Tyr) + AMP + diphosphate + H(+). Functionally, catalyzes the attachment of tyrosine to tRNA(Tyr) in a two-step reaction: tyrosine is first activated by ATP to form Tyr-AMP and then transferred to the acceptor end of tRNA(Tyr). This chain is Tyrosine--tRNA ligase, found in Caulobacter sp. (strain K31).